We begin with the raw amino-acid sequence, 176 residues long: Adenine phosphoribosyltransferase (176 aa).

The protein belongs to the purine/pyrimidine phosphoribosyltransferase family. Homodimer.

Its subcellular location is the cytoplasm. The catalysed reaction is AMP + diphosphate = 5-phospho-alpha-D-ribose 1-diphosphate + adenine. It participates in purine metabolism; AMP biosynthesis via salvage pathway; AMP from adenine: step 1/1. Catalyzes a salvage reaction resulting in the formation of AMP, that is energically less costly than de novo synthesis. In Borreliella burgdorferi (strain ZS7) (Borrelia burgdorferi), this protein is Adenine phosphoribosyltransferase.